The following is a 257-amino-acid chain: DNA repair protein RecO (257 aa).

Belongs to the RecO family.

Involved in DNA repair and RecF pathway recombination. The protein is DNA repair protein RecO of Streptococcus thermophilus (strain CNRZ 1066).